A 2410-amino-acid polypeptide reads, in one-letter code: MALRDTAGVPPLLQGYSIVEWPDLTCDRHPSPTPYTSTQPLSSFNVQSRGSLLLAAISRMLGAYCGASDILLAVQVPNKRDYVFVRVNWSDNETWQEVAARTASQTRKTKSKLLVGDIRRAFELPDKQNPCPVLVRFTPSEEPSYFSDFPAVFIFDAKKSSLTLSAPKSLLHPSINDQLLSQIISLYHHAGANPKTPVSSNPTFPSHLTSVYDRLPEEDISNAYPHIPLVKFATEYLERRAKTNPHDIAVRWFPELSIDDSNLPSETSTYEELDRKASQLGRWLVTRGLAPEDRVAVCLSRDLIFHAAFFGIMRAGGCYVPIDPELPDERKAYIARDSGAKFVLTTSELSSQDLFGSSTIYVDEPEVANAIDEQDGGTFNIATPEGLGYMLYTSGTTGNPKGCLLTNHGLAQAIIALSSTAADVRMKDIREGRYLAVASIAFDVHLAETIVPMALGMPLLSAPRSQLLENLPQYVKLLGITHLGIVPSLIEATLNASKDNEGGLALRYIASGGEKMSDSILDKWANHPQVRLANFYGPSEVTIGCCARYMDSNTPRANIGRPLANVSGYVVDADLNILPRGGVGELVVEGPLVGRGYHGRPDLTEKVFLEWPEKGRWAYRTGDLVRMMPDSTLEILGRIDTQIKVRGVRIESEGISAIVRKAEVPSADMVLDATTVLAKHPALGSEQLVSFVTWDSTVPVSTRKSLRPSLSIPPRGFLKSIRSICNKELASYMRPNHVIPLNWLPLSSNGKTDTKILVELFKNLDIAQLASLISSEDDVSVSRDCTPLEAEVFEIVQRHAPSYAQRPHPELNIFECGLDSMGVIRFAADLKLTFGKAIPATEIMKKPALQDIAQLVHVSTMNHSLVGTPLPTIDAATHKHLSSIYSNDIEDILPPFPVQEGVLARSVEDTSLYVQHVILHLDSGTSMSQLQRSWESVIAAHPILRTVFYVDRSVWQVVFKSFNLPNSWSDRSLSVKTVEEFRARFYSRFAGEITKDINRNLSSIPPFRLAYFRCTGFNVLVLSIHHALYDGTSLPVLLRDVENSYLGLERVQKASLRAILAEISKHDLALAQQFWRDSFREFEWPRPAFRQGSNALASSVKYLSVHFTQKLSVIREVANKKQVTLQALLSFTFAYLIGSRLYDSNDVAFGVIRSGRMLPVDNVDVALCPTITVLPMRVRLGDANSTLVNIQNGISTMTEHEHVPLGKVQNWLRPGEPLFEVLFSVSVQQQEESKIWRPCDYEPPAADYALSVEAVVNVHDDTLIVRAAWLDGLITQDHVADLLHGFEKVTLTLDKGEELPLPSRRSPEPVRKVNDDEDPSAQVLLDPVVVADLQQTICDFLEIPTAILTNRVSFISLGLDSIKAVGLAKRIRALGYDVSSTEILRASTLKRLARVVSNNKQKKEEPYEHYAQLVRQVEGYISKSEVQLSPEDEVKIIPSTALQSGMLSQTVGSDGRLYVHAFPLTLSPGVDVQRLKSAWEAAAEKIDILRTSFHFIPDNGTWVQVIHSFNELKWSIQNLEGFVNVTSAVKSFVESIECTDEFAFSTPPFWLRVFTPLKGPSVLALVMHHALYDGGSVNSLLDVVQRIYRGESISYPVQFADLLPDFFRQELQNLERTLLPLHSLPSSDPYHISIRQVEVKDVDLKRLLTETEVTLQCLLQGALAQSLAILTRSADVVFGNVVSGRVGRGTEEVVGPILNTIPCRVHISDHDSVDALLQSIHRFNMEAASWQQASLRSIQKALMVDRIWDCLFTFQPLAPPPQAAIWSLDIEEHEDIHIQYPLHVEIEQNKDGFSVRCACQSNVLDKAGLLNFMDTLSNTVQQFVANPKERIGRTFSVPSPSNTDPTPTTVVAPAPATVQAGIIHPVLLSAIRDFAPDAEVTFDTPLPALGIDSITAIQISGKCRRSGLRLTATQILNSSTVKDLVLQATEIKATAKSTQVSDGVFKPLSSEEKDSIARRFADDAKYIENISVTTAGMKWAIGGWQRTNGSLFQYLFTFKLPDDVDHARFKNAWHMFIRRHELMRSTFATAPGGTEPRIVTFSKDFKFDHWAEIVVDDAVFYRRLLGKMKEMVSDPVPISRPPVRAALFRSDKQSYFIFHIHHFQYDAWSMQVLLNDLSSIYYDQEPWAVTDLRAFTSLFDPNEERLSVQRRFWEKALSPSFKPSLLPSLLNEVQGPLATPTGQPQLIMVPGALTNVSRYEEQARKLGVTLQTVLLAAWAQVQANRSRTSASTFGVWQVSRSGHIDGIERLAVPCVNVLPIHVKVGGSLVEVTKRIQVDLSERLSQPVIEHSDLVNISKWTGMSGETPIFNVNVNVVKLPVTLKRDGLVEPVKAPYYIPRIAVPTVTPTLDRLAVSPLCQNDVVVDIIVYEESDSILMSIEAVDNIMTEGQAKDIIQEWASVVSTTLSYKD.

The interval 237 to 646 is adenylation 1; sequence LERRAKTNPH…GRIDTQIKVR (410 aa). Residues 783–860 enclose the Carrier 1 domain; the sequence is RDCTPLEAEV…DIAQLVHVST (78 aa). At Ser820 the chain carries O-(pantetheine 4'-phosphoryl)serine. Positions 891 to 1260 are condensation 1; it reads DILPPFPVQE…SVEAVVNVHD (370 aa). The disordered stretch occupies residues 1298–1317; sequence ELPLPSRRSPEPVRKVNDDE. Residues 1305–1314 show a composition bias toward basic and acidic residues; sequence RSPEPVRKVN. Positions 1324-1400 constitute a Carrier 2 domain; that stretch reads LLDPVVVADL…RLARVVSNNK (77 aa). Ser1361 is modified (O-(pantetheine 4'-phosphoryl)serine). Positions 1436-1839 are condensation 2; it reads IIPSTALQSG…RIGRTFSVPS (404 aa). The Carrier 3 domain maps to 1858–1932; sequence VQAGIIHPVL…DLVLQATEIK (75 aa). Ser1893 bears the O-(pantetheine 4'-phosphoryl)serine mark. The segment at 1992 to 2315 is condensation 3; it reads FQYLFTFKLP…TPIFNVNVNV (324 aa).

Belongs to the NRP synthetase family.

It participates in siderophore biosynthesis. Its function is as follows. Nonribosomal peptide synthase; part of the gene cluster that mediates the biosynthesis of coprinoferrin, an acylated tripeptide hydroxamate siderophore. The biosynthesis of coprinoferrin depends on the hydroxylation of ornithine to N(5)-hydroxyornithine, catalyzed by the monooxygenase cpf2. The second step, the acylation of N(5)-hydroxy-L-ornithine to yield N(5)-hexanoyl-N(5)-hydroxyl-L-ornithine is catalyzed by a not yet identified acyltransferase. Finally, assembly of coprinoferrin is catalyzed by the nonribosomal peptide synthase (NRPS) cpf1 via amide bond formation between three N(5)-hexanoyl-N(5)-hydroxyl-L-ornithine molecules to release the linear trimer. Interestingly, proteins seemingly not directly related to biosynthesis, such as transcription factors, replication factors, and autophagy-related proteins, are conserved among the clusters homologous to the coprinoferrin cluster, suggesting that the cluster may also play developmental and cell biological functions. This chain is Coprinoferrin synthetase, found in Coprinopsis cinerea (strain Okayama-7 / 130 / ATCC MYA-4618 / FGSC 9003) (Inky cap fungus).